Consider the following 311-residue polypeptide: Syndecan-1 (311 aa).

An N-terminal signal peptide occupies residues 1–22 (MRRAALWLWLCALALRLQPALP). Residues 23–255 (QIVAVNVPPE…SLLDRKEVLG (233 aa)) are Extracellular-facing. 2 disordered regions span residues 29 to 59 (VPPEDQDGSGDDSDNFSGSGTGALPDTLSRQ) and 152 to 184 (SHPHGGMQPGLHETSAPTAPGQPDHQPPRVEGG). The segment covering 32–42 (EDQDGSGDDSD) has biased composition (acidic residues). Residue Ser-37 is glycosylated (O-linked (Xyl...) (chondroitin sulfate) serine). The N-linked (GlcNAc...) asparagine glycan is linked to Asn-43. Residues Ser-45 and Ser-47 are each glycosylated (O-linked (Xyl...) (heparan sulfate) serine). O-linked (Xyl...) (chondroitin sulfate) serine glycosylation is found at Ser-207 and Ser-217. The helical transmembrane segment at 256–276 (GVIAGGLVGLIFAVCLVAFML) threads the bilayer. Topologically, residues 277-311 (YRMKKKDEGSYSLEEPKQANGGAYQKPTKQEEFYA) are cytoplasmic. A disordered region spans residues 285 to 311 (GSYSLEEPKQANGGAYQKPTKQEEFYA). Position 286 is a phosphoserine (Ser-286).

It belongs to the syndecan proteoglycan family. Interacts with CDCP1. Interacts (via C-terminus) with TIAM1 (via PDZ domain). Interacts with MDK. Shedding is enhanced by a number of factors such as heparanase, thrombin or EGF. Also by stress and wound healing. PMA-mediated shedding is inhibited by TIMP3.

The protein localises to the membrane. Its subcellular location is the secreted. The protein resides in the extracellular exosome. Cell surface proteoglycan that contains both heparan sulfate and chondroitin sulfate and that links the cytoskeleton to the interstitial matrix. Regulates exosome biogenesis in concert with SDCBP and PDCD6IP. Able to induce its own expression in dental mesenchymal cells and also in the neighboring dental epithelial cells via an MSX1-mediated pathway. This chain is Syndecan-1, found in Mus musculus (Mouse).